Here is a 199-residue protein sequence, read N- to C-terminus: Chaperone protein TorD (199 aa).

The protein belongs to the TorD/DmsD family. TorD subfamily.

The protein resides in the cytoplasm. Its function is as follows. Involved in the biogenesis of TorA. Acts on TorA before the insertion of the molybdenum cofactor and, as a result, probably favors a conformation of the apoenzyme that is competent for acquiring the cofactor. This chain is Chaperone protein TorD, found in Escherichia coli O81 (strain ED1a).